Reading from the N-terminus, the 1383-residue chain is Palladin (1383 aa).

Disordered regions lie at residues 1–22, 52–169, and 183–238; these read MSGT…EESK, DSET…SQLC, and FKAA…KSPG. The segment covering 78–96 has biased composition (basic and acidic residues); sequence HPSHKETKLGEHASRRPQD. A compositionally biased stretch (polar residues) spans 191 to 201; it reads RSPNGESSSPD. Ser192 is modified (phosphoserine). Residues 210–223 are compositionally biased toward low complexity; sequence QPSALLSASASQSP. One can recognise an Ig-like C2-type 1 domain in the interval 271-360; that stretch reads PRFIQKLRSQ…GSDTTSAEVF (90 aa). Cysteines 292 and 344 form a disulfide. Phosphoserine is present on Ser401. Positions 440-539 constitute an Ig-like C2-type 2 domain; sequence PPVFTKELQN…ATSTAQLVVT (100 aa). Cys462 and Cys521 form a disulfide bridge. Residues 562 to 566 are interaction with VASP; the sequence is FPPPP. Disordered regions lie at residues 609–653, 673–728, and 740–846; these read ETNG…LAKP, AGAR…SSGS, and AQNL…RFGH. Ser632 carries the phosphoserine modification. Thr635 bears the Phosphothreonine mark. Ser641 carries the post-translational modification Phosphoserine. The interaction with LASP1 stretch occupies residues 646 to 676; it reads PPPLLAKPKLDPLKLQQLQNQIRLEQEAGAR. The interval 676 to 696 is interaction with SORBS2, SPIN90 and SRC; it reads RQPPPAPRSAPPSPPFPPPPA. A compositionally biased stretch (pro residues) spans 677–697; that stretch reads QPPPAPRSAPPSPPFPPPPAF. A phosphoserine mark is found at Ser684, Ser688, and Ser728. Low complexity predominate over residues 745-763; that stretch reads PASGHGTPASSPSSSSLPS. An interaction with EPS8 region spans residues 766–831; the sequence is SPTPRQFGRA…PPPPPPLPSP (66 aa). The tract at residues 796–831 is interaction with SORBS2, SPIN90, SRC and PFN1; sequence SPSPPPPPPPVFSPTAAFPVPDVFPLPPPPPPLPSP. Pro residues-rich tracts occupy residues 797 to 807 and 817 to 830; these read PSPPPPPPPVF and DVFP…PLPS. An interaction with VASP region spans residues 819–823; the sequence is FPLPP. Over residues 832–846 the composition is skewed to polar residues; it reads GQASHCSSPATRFGH. Residues 833 to 890 are interaction with ACTN; the sequence is QASHCSSPATRFGHSQTPAAFLSALLPSQPPPAAVNALGLPKGVTPAGFPKKASRTAR. Phosphoserine occurs at positions 893, 979, and 984. Positions 1001 to 1085 constitute an Ig-like C2-type 3 domain; it reads PFFEMKLKHY…MAANPQGRIS (85 aa). The segment at 1096–1125 is disordered; that stretch reads NQRGRSPRSPSGHPHVRRPRSRSRDSGDEN. The segment covering 1098 to 1108 has biased composition (low complexity); that stretch reads RGRSPRSPSGH. 4 positions are modified to phosphoserine: Ser1101, Ser1104, Ser1106, and Ser1116. Ser1118 carries the phosphoserine; by PKB/AKT1 modification. Ser1121 is subject to Phosphoserine. Ig-like C2-type domains follow at residues 1135–1226 and 1233–1324; these read PHFL…LVVA and PPVF…ARLD. 2 interaction with EZR regions span residues 1137-1226 and 1236-1326; these read FLQA…LVVA and FIEK…LDVY. Cys1156 and Cys1208 form a disulfide bridge. Ser1352 bears the Phosphoserine mark.

The protein belongs to the myotilin/palladin family. Interacts with EPS8. Interacts with LASP1. Interacts with VASP. Interacts with ACTN. Interacts with SORBS2. Interacts with PFN1. Interacts with LPP. Interacts with SPIN90. Interacts with SRC. Interacts with EZR. Interacts with RAI14. In terms of processing, phosphorylated predominantly on serines and, to a lesser extent, on tyrosines. Phosphorylation at Ser-1118 by PKB/AKT1 modulates cytoskeletal organization and cell motility. In terms of tissue distribution, detected in both muscle and non-muscle tissues. High expression in prostate, ovary, colon, and kidney. Not detected in spleen, skeletal muscle, lung and peripheral blood lymphocytes (at protein level). Protein is overexpressed in FA6, HPAF, IMIM-PC2, SUIT-2 and PancTu-II sporadic pancreatic cancer cell lines.

It is found in the cytoplasm. The protein resides in the cytoskeleton. The protein localises to the cell junction. Its subcellular location is the focal adhesion. It localises to the myofibril. It is found in the sarcomere. The protein resides in the z line. The protein localises to the cell projection. Its subcellular location is the ruffle. It localises to the podosome. It is found in the lamellipodium. The protein resides in the axon. The protein localises to the growth cone. Functionally, cytoskeletal protein required for organization of normal actin cytoskeleton. Roles in establishing cell morphology, motility, cell adhesion and cell-extracellular matrix interactions in a variety of cell types. May function as a scaffolding molecule with the potential to influence both actin polymerization and the assembly of existing actin filaments into higher-order arrays. Binds to proteins that bind to either monomeric or filamentous actin. Localizes at sites where active actin remodeling takes place, such as lamellipodia and membrane ruffles. Different isoforms may have functional differences. Involved in the control of morphological and cytoskeletal changes associated with dendritic cell maturation. Involved in targeting ACTN to specific subcellular foci. This Homo sapiens (Human) protein is Palladin (PALLD).